The chain runs to 338 residues: Acetylcholinesterase (338 aa).

N8 carries an N-linked (GlcNAc...) asparagine glycan. S99 acts as the Acyl-ester intermediate in catalysis. A disulfide bond links C153 and C164. The active-site Charge relay system is the E226.

Belongs to the type-B carboxylesterase/lipase family.

Its subcellular location is the synapse. It is found in the secreted. The protein resides in the cell membrane. The catalysed reaction is acetylcholine + H2O = choline + acetate + H(+). In terms of biological role, terminates signal transduction at the neuromuscular junction by rapid hydrolysis of the acetylcholine released into the synaptic cleft. The polypeptide is Acetylcholinesterase (ache) (Myxine glutinosa (Atlantic hagfish)).